The primary structure comprises 295 residues: Small ribosomal subunit protein uS2 (295 aa).

An N-acetylserine modification is found at Ser2. Residue Ser43 is modified to Phosphoserine. N6-acetyllysine is present on Lys52. The tract at residues Thr54–Gln113 is interaction with PPP1R16B. An N6-acetyllysine; alternate modification is found at Lys89. A Glycyl lysine isopeptide (Lys-Gly) (interchain with G-Cter in SUMO2); alternate cross-link involves residue Lys89. Thr97 bears the Phosphothreonine mark. 2 laminin-binding regions span residues Ile161–Arg180 and Arg205–Gly229. [DE]-W-[ST] repeat units lie at residues Glu230–Thr232, Asp247–Ser249, Asp266–Ser268, Asp275–Ser277, and Glu293–Ser295. The laminin-binding stretch occupies residues Gln242–Ser295. The interval Asp266–Ser295 is disordered.

It belongs to the universal ribosomal protein uS2 family. As to quaternary structure, monomer (37LRP) and homodimer (67LR). Component of the small ribosomal subunit. Mature ribosomes consist of a small (40S) and a large (60S) subunit. The 40S subunit contains about 33 different proteins and 1 molecule of RNA (18S). The 60S subunit contains about 49 different proteins and 3 molecules of RNA (28S, 5.8S and 5S). Interacts with RPS21. Interacts with several laminins including at least LAMB1. Interacts with MDK. The mature dimeric form interacts with PPP1R16B (via its fourth ankyrin repeat). Interacts with PPP1CA only in the presence of PPP1R16B. In terms of processing, acylated. Acylation may be a prerequisite for conversion of the monomeric 37 kDa laminin receptor precursor (37LRP) to the mature dimeric 67 kDa laminin receptor (67LR), and may provide a mechanism for membrane association. Cleaved by stromelysin-3 (ST3) at the cell surface. Cleavage by stromelysin-3 may be a mechanism to alter cell-extracellular matrix interactions.

The protein localises to the cell membrane. Its subcellular location is the cytoplasm. The protein resides in the nucleus. Its function is as follows. Required for the assembly and/or stability of the 40S ribosomal subunit. Required for the processing of the 20S rRNA-precursor to mature 18S rRNA in a late step of the maturation of 40S ribosomal subunits. Also functions as a cell surface receptor for laminin. Plays a role in cell adhesion to the basement membrane and in the consequent activation of signaling transduction pathways. May play a role in cell fate determination and tissue morphogenesis. Also acts as a receptor for several other ligands, including the pathogenic prion protein, viruses, and bacteria. Acts as a PPP1R16B-dependent substrate of PPP1CA. The sequence is that of Small ribosomal subunit protein uS2 from Bos taurus (Bovine).